A 227-amino-acid polypeptide reads, in one-letter code: UPF0758 protein Pcryo_2119 (227 aa).

The MPN domain occupies 102–224; it reads GLGRSQMVKD…TLSYAENSLP (123 aa). Zn(2+) contacts are provided by His173, His175, and Asp186. The JAMM motif motif lies at 173 to 186; that stretch reads HNHPHTDAKPSTAD.

It belongs to the UPF0758 family.

The sequence is that of UPF0758 protein Pcryo_2119 from Psychrobacter cryohalolentis (strain ATCC BAA-1226 / DSM 17306 / VKM B-2378 / K5).